Consider the following 150-residue polypeptide: MVHATSPLLLLLLLSLALVAPGLSARKCSLTGEWDNNLGSIMTIGAVNDNGEFNGTYITAVADNPGNIKLSPLLGIQHKRACQPTFGFTVHWNFSESTSVFVGQCFVDRSGKEVLKTKWLQRLAVDDISDDWKATRVGYNNFTRQRTVEE.

An N-terminal signal peptide occupies residues 1–24 (MVHATSPLLLLLLLSLALVAPGLS). An Avidin-like domain is found at 26–147 (RKCSLTGEWD…GYNNFTRQRT (122 aa)). The cysteines at positions 28 and 105 are disulfide-linked. Biotin contacts are provided by asparagine 36 and serine 40. Asparagine 54 is a glycosylation site (N-linked (GlcNAc...) asparagine). Tyrosine 57, threonine 59, and aspartate 63 together coordinate biotin. Asparagine 93 is a glycosylation site (N-linked (GlcNAc...) asparagine). Biotin is bound by residues serine 95, serine 99, and asparagine 140. An N-linked (GlcNAc...) asparagine glycan is attached at asparagine 141.

Belongs to the avidin/streptavidin family. Homotetramer. In terms of processing, glycosylated.

The protein resides in the secreted. In terms of biological role, forms a strong non-covalent specific complex with biotin. In Gallus gallus (Chicken), this protein is Avidin-related protein 6 (AVR6).